The following is a 395-amino-acid chain: NAD(P)H-quinone oxidoreductase subunit H, chloroplastic (395 aa).

Belongs to the complex I 49 kDa subunit family. NDH is composed of at least 16 different subunits, 5 of which are encoded in the nucleus.

The protein resides in the plastid. It localises to the chloroplast thylakoid membrane. The enzyme catalyses a plastoquinone + NADH + (n+1) H(+)(in) = a plastoquinol + NAD(+) + n H(+)(out). The catalysed reaction is a plastoquinone + NADPH + (n+1) H(+)(in) = a plastoquinol + NADP(+) + n H(+)(out). Its function is as follows. NDH shuttles electrons from NAD(P)H:plastoquinone, via FMN and iron-sulfur (Fe-S) centers, to quinones in the photosynthetic chain and possibly in a chloroplast respiratory chain. The immediate electron acceptor for the enzyme in this species is believed to be plastoquinone. Couples the redox reaction to proton translocation, and thus conserves the redox energy in a proton gradient. The polypeptide is NAD(P)H-quinone oxidoreductase subunit H, chloroplastic (Citrus sinensis (Sweet orange)).